The primary structure comprises 282 residues: Bis(5'-nucleosyl)-tetraphosphatase, symmetrical (282 aa).

Belongs to the Ap4A hydrolase family.

It catalyses the reaction P(1),P(4)-bis(5'-adenosyl) tetraphosphate + H2O = 2 ADP + 2 H(+). In terms of biological role, hydrolyzes diadenosine 5',5'''-P1,P4-tetraphosphate to yield ADP. This chain is Bis(5'-nucleosyl)-tetraphosphatase, symmetrical, found in Enterobacter sp. (strain 638).